Consider the following 383-residue polypeptide: 23S rRNA (uracil(747)-C(5))-methyltransferase RlmC (383 aa).

Residues Cys-3, Cys-11, Cys-14, and Cys-89 each coordinate [4Fe-4S] cluster. Positions 214, 243, 270, and 315 each coordinate S-adenosyl-L-methionine. The Nucleophile role is filled by Cys-342.

It belongs to the class I-like SAM-binding methyltransferase superfamily. RNA M5U methyltransferase family. RlmC subfamily.

The catalysed reaction is uridine(747) in 23S rRNA + S-adenosyl-L-methionine = 5-methyluridine(747) in 23S rRNA + S-adenosyl-L-homocysteine + H(+). Catalyzes the formation of 5-methyl-uridine at position 747 (m5U747) in 23S rRNA. The chain is 23S rRNA (uracil(747)-C(5))-methyltransferase RlmC from Actinobacillus succinogenes (strain ATCC 55618 / DSM 22257 / CCUG 43843 / 130Z).